The following is a 289-amino-acid chain: ATP synthase subunit a (289 aa).

Transmembrane regions (helical) follow at residues alanine 43–phenylalanine 63, isoleucine 104–valine 124, isoleucine 160–leucine 180, isoleucine 193–alanine 213, isoleucine 232–valine 252, and alanine 259–valine 279.

It belongs to the ATPase A chain family. As to quaternary structure, F-type ATPases have 2 components, CF(1) - the catalytic core - and CF(0) - the membrane proton channel. CF(1) has five subunits: alpha(3), beta(3), gamma(1), delta(1), epsilon(1). CF(0) has three main subunits: a(1), b(2) and c(9-12). The alpha and beta chains form an alternating ring which encloses part of the gamma chain. CF(1) is attached to CF(0) by a central stalk formed by the gamma and epsilon chains, while a peripheral stalk is formed by the delta and b chains.

It localises to the cell inner membrane. Functionally, key component of the proton channel; it plays a direct role in the translocation of protons across the membrane. This Pseudomonas paraeruginosa (strain DSM 24068 / PA7) (Pseudomonas aeruginosa (strain PA7)) protein is ATP synthase subunit a.